Consider the following 479-residue polypeptide: Proline--tRNA ligase 2 (479 aa).

This sequence belongs to the class-II aminoacyl-tRNA synthetase family. ProS type 3 subfamily. In terms of assembly, homodimer.

The protein resides in the cytoplasm. It catalyses the reaction tRNA(Pro) + L-proline + ATP = L-prolyl-tRNA(Pro) + AMP + diphosphate. Its function is as follows. Catalyzes the attachment of proline to tRNA(Pro) in a two-step reaction: proline is first activated by ATP to form Pro-AMP and then transferred to the acceptor end of tRNA(Pro). This Rhodococcus jostii (strain RHA1) protein is Proline--tRNA ligase 2.